Here is a 341-residue protein sequence, read N- to C-terminus: Cysteine-rich with EGF-like domain protein 2 (341 aa).

The first 24 residues, 1–24 (MLLSCSIFRLFCIILLLQLGSIYT), serve as a signal peptide directing secretion. Positions 136 to 178 (DCNTCIGGADRPCHGNGKCDGDGTRAGNGKCSCDEGYDGEFCL) constitute an EGF-like domain. 3 disulfide bridges follow: Cys140-Cys154, Cys148-Cys166, and Cys168-Cys177. Residue Asn190 is glycosylated (N-linked (GlcNAc...) asparagine). FU repeat units lie at residues 193–248 (FFLC…DQYC) and 254–308 (SFSC…NQHC). Residues 291–317 (DIDECTEDPASCSDNQHCLNTDGSFSC) form the EGF-like 2; calcium-binding; truncated domain.

The protein belongs to the CRELD family.

It is found in the secreted. The protein resides in the endoplasmic reticulum. Its function is as follows. Possible role in neuronal acetylcholine receptor transport. This is Cysteine-rich with EGF-like domain protein 2 (creld2) from Danio rerio (Zebrafish).